Here is a 517-residue protein sequence, read N- to C-terminus: Golgi-associated kinase 1B (517 aa).

The Cytoplasmic portion of the chain corresponds to 1-36 (MTCPDKPGQLVNWFVCSLCAPRVCKLWSSRRPRTRR). Residues 37–56 (NLLLGTACAIYLGFLVSQVG) traverse the membrane as a helical; Signal-anchor for type II membrane protein segment. Topologically, residues 57–517 (RGSFQHGQAT…HGARVLPMNE (461 aa)) are extracellular. 2 N-linked (GlcNAc...) asparagine glycosylation sites follow: N98 and N287.

The protein belongs to the GASK family.

The protein localises to the golgi apparatus membrane. This chain is Golgi-associated kinase 1B, found in Mus musculus (Mouse).